The following is a 901-amino-acid chain: Protein translocase subunit SecA 1 (901 aa).

Residues Q87, 105–109, and D500 each bind ATP; that span reads GEGKT. Residues 847–901 form a disordered region; the sequence is LNHPESGSWGGEGEGPSSEGAPHLPFKRDGEKVGRNQACPCGSGKKYKQCCGKLS. Residues C885, C887, C896, and C897 each coordinate Zn(2+).

It belongs to the SecA family. As to quaternary structure, monomer and homodimer. Part of the essential Sec protein translocation apparatus which comprises SecA, SecYEG and auxiliary proteins SecDF-YajC and YidC. It depends on Zn(2+) as a cofactor.

Its subcellular location is the cell inner membrane. The protein localises to the cytoplasm. The catalysed reaction is ATP + H2O + cellular proteinSide 1 = ADP + phosphate + cellular proteinSide 2.. Its function is as follows. Part of the Sec protein translocase complex. Interacts with the SecYEG preprotein conducting channel. Has a central role in coupling the hydrolysis of ATP to the transfer of proteins into and across the cell membrane, serving both as a receptor for the preprotein-SecB complex and as an ATP-driven molecular motor driving the stepwise translocation of polypeptide chains across the membrane. This chain is Protein translocase subunit SecA 1, found in Magnetococcus marinus (strain ATCC BAA-1437 / JCM 17883 / MC-1).